The primary structure comprises 605 residues: Capsid scaffolding protein (605 aa).

Catalysis depends on charge relay system residues H48, S116, and H139. Positions 235–274 (ASDAPDLQKPDKALQSPPPASTDPATMLSGNAGEGATACG) are disordered. An interaction with pAP region spans residues 281-300 (QDLISVPRNTFMTLLQTNLD). 2 disordered regions span residues 403 to 431 (DYVP…FPGE) and 489 to 588 (PHQS…KSVS). Positions 410-416 (RSNKRKR) match the Nuclear localization signal motif. Positions 568 to 579 (ASASGVAQSKEP) are enriched in polar residues. The tract at residues 585 to 605 (KSVSAHLKSIFCEELLNKRVA) is interaction with major capsid protein.

This sequence belongs to the herpesviridae capsid scaffolding protein family. Homomultimer. Interacts with major capsid protein. As to quaternary structure, exists in a monomer-dimer equilibrium with the dimer being the active species. Capsid scaffolding protein is cleaved by assemblin after formation of the spherical procapsid. As a result, the capsid obtains its mature, icosahedral shape. Cleavages occur at two or more sites: release (R-site) and maturation (M-site).

The protein localises to the host cytoplasm. Its subcellular location is the host nucleus. The enzyme catalyses Cleaves -Ala-|-Ser- and -Ala-|-Ala- bonds in the scaffold protein.. Acts as a scaffold protein by binding major capsid protein in the cytoplasm, inducing the nuclear localization of both proteins. Multimerizes in the nucleus such as major capsid protein forms the icosahedral T=16 capsid. Autocatalytic cleavage releases the assembly protein, and subsequently abolishes interaction with major capsid protein. Cleavages products are evicted from the capsid before or during DNA packaging. In terms of biological role, protease that plays an essential role in virion assembly within the nucleus. Catalyzes the cleavage of the assembly protein after formation of the spherical procapsid. By that cleavage, the capsid matures and gains its icosahedral shape. The cleavage sites seem to include -Ala-Ser-, -Ala-Ala-, as well as Ala-Thr bonds. Assemblin and cleavages products are evicted from the capsid before or during DNA packaging. Its function is as follows. Plays a major role in capsid assembly. Acts as a scaffold protein by binding major capsid protein. Multimerizes in the nucleus such as major capsid protein forms the icosahedral T=16 capsid. Cleaved by assemblin after capsid completion. The cleavages products are evicted from the capsid before or during DNA packaging. The chain is Capsid scaffolding protein from Homo sapiens (Human).